The following is a 400-amino-acid chain: MLRWFTAGESHGMELVAILEGLPAGIPVSLEHIGNELSRRRLGFGRSARQKFEKDLVTLSAGVLHGSTLGSPVAIRITNSEWGKWEKIMTPEVPCKSDMSDAKRAQGLYKPRPGHADLVGMQKYGFQNSRLVLERASARETAARVACGAVAKAFLQQLDIFILSHVKQIGSIKIDYEQGAYPRFCDLEAIDSSPVRCFDKNTSEKMKDELHRIKRCGDTLGGVFEVLAYGLPPGLGSYVHWDRRLDAMLSAAIMSIQAVKAVEIGDGLAISALPGSEAHDQIVLESGLLTRMSNHSGGVEGGVTTGSALRISGSMKPISTVPRALKTVDISTRQPANADHQRSDICAVPAAAVVGESMVALTISCAILDKFGGDSLCEIKRNFSGYLNSIPKNLMSVIER.

Residues arginine 40 and arginine 46 each coordinate NADP(+). Residues arginine 135–serine 137, glutamine 257–alanine 258, glycine 301, lysine 316–threonine 320, and arginine 342 each bind FMN.

This sequence belongs to the chorismate synthase family. As to quaternary structure, homotetramer. Requires FMNH2 as cofactor.

The catalysed reaction is 5-O-(1-carboxyvinyl)-3-phosphoshikimate = chorismate + phosphate. Its pathway is metabolic intermediate biosynthesis; chorismate biosynthesis; chorismate from D-erythrose 4-phosphate and phosphoenolpyruvate: step 7/7. Catalyzes the anti-1,4-elimination of the C-3 phosphate and the C-6 proR hydrogen from 5-enolpyruvylshikimate-3-phosphate (EPSP) to yield chorismate, which is the branch point compound that serves as the starting substrate for the three terminal pathways of aromatic amino acid biosynthesis. This reaction introduces a second double bond into the aromatic ring system. In Tropheryma whipplei (strain TW08/27) (Whipple's bacillus), this protein is Chorismate synthase.